The chain runs to 787 residues: MPSQDSDFPQKEHEKMTEFQEAVTFKDVAVVFTEEELGLLDSAQRKLYQDVMVENFRNLVSVGHVPFKADMVSQLETEEKLWTMERETQRNGHSSEIHSAVTSGSKIPNEMETLGKVMFKYLSCEELSCWQIWKHTTNDLTLQRKSSWFLHGDSLQVSEDENHIMNHKGDHFGCLENQEFLIPTAQASCGSRCLSESENPSRGKQMSVKNHLHVCEGFTKNSPLSDPGKTDAKQTPCKGERPHPCRVCGEGFSHGAVLPVHQVDPGEKCSHLQTHQRIHPGGTVNKCPKSGDGFHQNSFHPHHSNPTGEKSYRCDSCGKAFGSSTGLIIHYRTHTGEKPYRCEACGKCFSQSSNFQCHQRVHTEEKPYKCEECGKGFGWSVNLRVHQRVHRGEKPYKCEECGKGFTQAAHYHIHQRVHTGEKPYKCDVCGKGFSHNSPLICHRRVHTGEKPYRCEACGKGFTRNTDLHIHFRVHTGEKPYTCKECGKGFSQASNLQVHQNVHTGEKRFKCETCGKGFSQSSKLQTHQRVHTGEKPYRCDVCGKDFSYSSNLKLHQVIHTGEKPYTCEACGKGFSWRSNLHAHQRVHSGEKPYKCEACDKSFSQAIDFRVHQRVHTGEKPYKCGVCGKGFSQSSGLQSHQRVHTGEKPYKCDVCGKGFRYSSQFIYHQRGHTGEKPYKCEECGKGFGRSLNLRHHQRVHTGEKPHKCEECGKAFSLPSNLRVHLSVHTREKLFKCEDCGKGFSQSSRLQAHQRVHTGEKPYKCNICGKDFSHRSRLTYHQKVHTGKNL.

The region spanning 23–94 (VTFKDVAVVF…ERETQRNGHS (72 aa)) is the KRAB domain. C2H2-type zinc fingers lie at residues 243 to 275 (HPCRVCGEGFSHGAVLPVHQVDPGEKCSHLQTH), 312 to 334 (YRCDSCGKAFGSSTGLIIHYRTH), 340 to 362 (YRCEACGKCFSQSSNFQCHQRVH), 368 to 390 (YKCEECGKGFGWSVNLRVHQRVH), 396 to 418 (YKCEECGKGFTQAAHYHIHQRVH), 424 to 446 (YKCDVCGKGFSHNSPLICHRRVH), 452 to 474 (YRCEACGKGFTRNTDLHIHFRVH), 480 to 502 (YTCKECGKGFSQASNLQVHQNVH), 508 to 530 (FKCETCGKGFSQSSKLQTHQRVH), 536 to 558 (YRCDVCGKDFSYSSNLKLHQVIH), 564 to 586 (YTCEACGKGFSWRSNLHAHQRVH), 592 to 614 (YKCEACDKSFSQAIDFRVHQRVH), 620 to 642 (YKCGVCGKGFSQSSGLQSHQRVH), 648 to 670 (YKCDVCGKGFRYSSQFIYHQRGH), 676 to 698 (YKCEECGKGFGRSLNLRHHQRVH), 704 to 726 (HKCEECGKAFSLPSNLRVHLSVH), 732 to 754 (FKCEDCGKGFSQSSRLQAHQRVH), and 760 to 782 (YKCNICGKDFSHRSRLTYHQKVH).

Belongs to the krueppel C2H2-type zinc-finger protein family.

The protein localises to the nucleus. Its function is as follows. May be involved in transcriptional regulation. This Bos taurus (Bovine) protein is Zinc finger protein 227 (ZNF227).